Here is a 120-residue protein sequence, read N- to C-terminus: Large ribosomal subunit protein bL20 (120 aa).

It belongs to the bacterial ribosomal protein bL20 family.

In terms of biological role, binds directly to 23S ribosomal RNA and is necessary for the in vitro assembly process of the 50S ribosomal subunit. It is not involved in the protein synthesizing functions of that subunit. The protein is Large ribosomal subunit protein bL20 of Ureaplasma parvum serovar 3 (strain ATCC 27815 / 27 / NCTC 11736).